The primary structure comprises 299 residues: Protease HtpX homolog (299 aa).

The next 2 helical transmembrane spans lie at V16–F36 and S38–I58. H144 lines the Zn(2+) pocket. E145 is an active-site residue. Zn(2+) is bound at residue H148. 2 helical membrane passes run I159 to W179 and V198 to V218. E227 is a Zn(2+) binding site.

The protein belongs to the peptidase M48B family. It depends on Zn(2+) as a cofactor.

It is found in the cell membrane. The polypeptide is Protease HtpX homolog (Lactiplantibacillus plantarum (strain ATCC BAA-793 / NCIMB 8826 / WCFS1) (Lactobacillus plantarum)).